Here is a 276-residue protein sequence, read N- to C-terminus: Formamidopyrimidine-DNA glycosylase (276 aa).

Catalysis depends on Pro-2, which acts as the Schiff-base intermediate with DNA. Glu-3 serves as the catalytic Proton donor. Lys-58 (proton donor; for beta-elimination activity) is an active-site residue. 3 residues coordinate DNA: His-94, Arg-112, and Arg-157. Residues 242–276 form an FPG-type zinc finger; sequence FVYDRAGEPCRVCGAPIRQIVQGQRSTYYCPNCQR. Arg-266 (proton donor; for delta-elimination activity) is an active-site residue.

The protein belongs to the FPG family. In terms of assembly, monomer. The cofactor is Zn(2+).

It catalyses the reaction Hydrolysis of DNA containing ring-opened 7-methylguanine residues, releasing 2,6-diamino-4-hydroxy-5-(N-methyl)formamidopyrimidine.. It carries out the reaction 2'-deoxyribonucleotide-(2'-deoxyribose 5'-phosphate)-2'-deoxyribonucleotide-DNA = a 3'-end 2'-deoxyribonucleotide-(2,3-dehydro-2,3-deoxyribose 5'-phosphate)-DNA + a 5'-end 5'-phospho-2'-deoxyribonucleoside-DNA + H(+). Involved in base excision repair of DNA damaged by oxidation or by mutagenic agents. Acts as a DNA glycosylase that recognizes and removes damaged bases. Has a preference for oxidized purines, such as 7,8-dihydro-8-oxoguanine (8-oxoG). Has AP (apurinic/apyrimidinic) lyase activity and introduces nicks in the DNA strand. Cleaves the DNA backbone by beta-delta elimination to generate a single-strand break at the site of the removed base with both 3'- and 5'-phosphates. This chain is Formamidopyrimidine-DNA glycosylase, found in Burkholderia thailandensis (strain ATCC 700388 / DSM 13276 / CCUG 48851 / CIP 106301 / E264).